We begin with the raw amino-acid sequence, 339 residues long: Chromo domain-containing protein cec-3 (339 aa).

Positions M1 to D21 are disordered. The region spanning F24–L84 is the Chromo domain. The segment covering Q91–K105 has biased composition (basic residues). 2 disordered regions span residues Q91–S199 and E215–L272. 2 stretches are compositionally biased toward basic and acidic residues: residues T106–D117 and A171–L183. Residues D184 to E193 are compositionally biased toward acidic residues. The segment covering K230–S241 has biased composition (basic and acidic residues). Residues E242–V251 are compositionally biased toward low complexity.

In terms of tissue distribution, expressed in every cell of the embryo (at protein level). In adults, expressed predominantly in the head region and the germline.

The protein localises to the chromosome. It localises to the nucleus. Its function is as follows. Specifically recognizes and binds methylated 'Lys-9' of histone H3 (H3K9me), with highest preference for trimethylated 'Lys-9' (H3K9me3) followed by dimethylated 'Lys-9' (H3K9me2) followed by monomethylated 'Lys-9' (H3K9me1). Plays a role in maintaining correct unc-4 expression in the VC motor neurons where unc-4 is expressed in the vulval but not in the non-vulval VC neurons. In Caenorhabditis elegans, this protein is Chromo domain-containing protein cec-3 (cec-3).